We begin with the raw amino-acid sequence, 274 residues long: DegV domain-containing protein Cgl2349/cg2579 (274 aa).

The DegV domain maps to 3–259 (VRVIVDSSAC…PGAVSVSAVF (257 aa)). Positions 39 and 73 each coordinate hexadecanoate.

In terms of assembly, monomer.

Functionally, binds long-chain fatty acids, such as palmitate, and may play a role in lipid transport or fatty acid metabolism. This chain is DegV domain-containing protein Cgl2349/cg2579, found in Corynebacterium glutamicum (strain ATCC 13032 / DSM 20300 / JCM 1318 / BCRC 11384 / CCUG 27702 / LMG 3730 / NBRC 12168 / NCIMB 10025 / NRRL B-2784 / 534).